Reading from the N-terminus, the 184-residue chain is Large ribosomal subunit protein uL18 (184 aa).

It belongs to the universal ribosomal protein uL18 family. Part of the 50S ribosomal subunit. Contacts the 5S and 23S rRNAs.

Its function is as follows. This is one of the proteins that bind and probably mediate the attachment of the 5S RNA into the large ribosomal subunit, where it forms part of the central protuberance. This chain is Large ribosomal subunit protein uL18 (rpl18), found in Haloferax volcanii (strain ATCC 29605 / DSM 3757 / JCM 8879 / NBRC 14742 / NCIMB 2012 / VKM B-1768 / DS2) (Halobacterium volcanii).